The chain runs to 739 residues: Polyphosphate kinase (739 aa).

The tract at residues tryptophan 22 to proline 45 is disordered. The segment covering serine 27–serine 40 has biased composition (low complexity). Residue asparagine 87 coordinates ATP. The Mg(2+) site is built by arginine 428 and arginine 458. Catalysis depends on histidine 488, which acts as the Phosphohistidine intermediate. Residues tyrosine 521, arginine 621, and histidine 649 each coordinate ATP. Residues glutamine 714–arginine 739 are disordered. Residues glutamine 724–arginine 739 show a composition bias toward basic and acidic residues.

It belongs to the polyphosphate kinase 1 (PPK1) family. Requires Mg(2+) as cofactor. An intermediate of this reaction is the autophosphorylated ppk in which a phosphate is covalently linked to a histidine residue through a N-P bond.

The catalysed reaction is [phosphate](n) + ATP = [phosphate](n+1) + ADP. Its function is as follows. Catalyzes the reversible transfer of the terminal phosphate of ATP to form a long-chain polyphosphate (polyP). This chain is Polyphosphate kinase, found in Mycobacterium leprae (strain TN).